A 193-amino-acid polypeptide reads, in one-letter code: Probable nicotinate-nucleotide adenylyltransferase (193 aa).

It belongs to the NadD family.

The catalysed reaction is nicotinate beta-D-ribonucleotide + ATP + H(+) = deamido-NAD(+) + diphosphate. It functions in the pathway cofactor biosynthesis; NAD(+) biosynthesis; deamido-NAD(+) from nicotinate D-ribonucleotide: step 1/1. Functionally, catalyzes the reversible adenylation of nicotinate mononucleotide (NaMN) to nicotinic acid adenine dinucleotide (NaAD). In Endomicrobium trichonymphae, this protein is Probable nicotinate-nucleotide adenylyltransferase.